Reading from the N-terminus, the 88-residue chain is DNA-directed RNA polymerase subunit omega (88 aa).

It belongs to the RNA polymerase subunit omega family. In terms of assembly, the RNAP catalytic core consists of 2 alpha, 1 beta, 1 beta' and 1 omega subunit. When a sigma factor is associated with the core the holoenzyme is formed, which can initiate transcription.

The enzyme catalyses RNA(n) + a ribonucleoside 5'-triphosphate = RNA(n+1) + diphosphate. Its function is as follows. Promotes RNA polymerase assembly. Latches the N- and C-terminal regions of the beta' subunit thereby facilitating its interaction with the beta and alpha subunits. This Haemophilus influenzae (strain PittEE) protein is DNA-directed RNA polymerase subunit omega.